Consider the following 779-residue polypeptide: MIGKTFTTMLGGRELSIETGKLAKLVSGSVTVRYGDTLLLVTAQASDTQSKLDFLPLTVEFEERHYAVGKIPGSFQRREGRPGEKAILSARITDRQIRPLFPKGYRHETQVIITVLSADGQNAPDVLGPIGAAAALSISDIPWAGPTACVRVGQIDGQYVVNPTTEQLTRSRMDLVVAGTREAVMMVECGAQTVSEDDLVGAIEFAHAEMQGVIALIEQMRAEVGHEKFNFLAEEGPANDYVPELTEKAKAAGLRDALLTHGKKDRSARLKALRNGLIEGYVPDPTAEGSAELTQALKDAFGKVEKRELRRLILEENLRADGRDSKTVRPIWIEARPLPTAHGSAVFTRGETQVLGVTTLGTERDEILIDDLTAESGDKFLLHYNFPPYSTGEVKRMGGQSRREIGHGNLAKRAIRAVLPSFEEFPYVIRVVGDVLESNGSSSMGTVCAGTLSLMDAGVPLKAPVAGVAMGLVMEGDNYRVLTDILGLEDALGDMDFKVCGTAEGVTALQMDIKVGGITPQIMREALAQAKEGRLHILGKMAEVLAAPRAELSPTAPHILSLKINPELIGKVIGPGGKQVRELEAMGAQVTIEEDGTVRIFSASGESAEAVKARIEAVTKEAKVGEEFEGTVVKIAPFGAFVNLFPGQDGMLHISQLSEQRVENVEDVLTVGDKLKVKIANIDDRGKIDLIRPELEGKVPLREPRAPRGGDRGPRRDSDRGGDRGPRREFSDRGPRPEGARSERPEGQRTERPATAPATQESSQSSDAPAAPVFPRRED.

Residues D490 and D496 each contribute to the Mg(2+) site. In terms of domain architecture, KH spans 557–618; the sequence is PHILSLKINP…EAVKARIEAV (62 aa). Residues 625–693 form the S1 motif domain; sequence GEEFEGTVVK…DRGKIDLIRP (69 aa). The span at 699 to 752 shows a compositional bias: basic and acidic residues; sequence VPLREPRAPRGGDRGPRRDSDRGGDRGPRREFSDRGPRPEGARSERPEGQRTER. The segment at 699 to 779 is disordered; it reads VPLREPRAPR…AAPVFPRRED (81 aa). Positions 757-767 are enriched in polar residues; the sequence is PATQESSQSSD.

This sequence belongs to the polyribonucleotide nucleotidyltransferase family. The cofactor is Mg(2+).

The protein resides in the cytoplasm. It carries out the reaction RNA(n+1) + phosphate = RNA(n) + a ribonucleoside 5'-diphosphate. Functionally, involved in mRNA degradation. Catalyzes the phosphorolysis of single-stranded polyribonucleotides processively in the 3'- to 5'-direction. This is Polyribonucleotide nucleotidyltransferase from Deinococcus radiodurans (strain ATCC 13939 / DSM 20539 / JCM 16871 / CCUG 27074 / LMG 4051 / NBRC 15346 / NCIMB 9279 / VKM B-1422 / R1).